Here is a 524-residue protein sequence, read N- to C-terminus: MTDIHAQKILILDFGSQYTQLIARRVRELGVYSEIHPYDCGDDFITEFAPQGIILSGGPESVTGTGTPRAPASVFTLGVPVLGICYGMQTMAAQLGGKVEAVEHREFGYAQVRAHGHSQLLNGIEDHTTPEGHGLLDVWMSHGDQVVGLPPGFKLIASTESAPIAGMADEERRFYALQFHPEVTHTRQGKRILERFVRKLCQCEARWTTGNIVEDAITRVRNRIGAERVVLGLSGGVDSSVVAALLQHAIGEQLTCVFVDTGLLRLNEGDQVMATFAEHMGVRVIRVNAEERFLQALQGIADPEDKRKIIGRLFVEIFDEEAAKIEDARWLAQGTIYPDVIESAGSKTGKAHVIKSHHNVGGLPETMKLQLVEPLRELFKDEVRQIGLELGLPYEMVYRHPFPGPGLGVRILGEVRKEYADLLRRADAIFIEELYRHDLYDKVSQAFAVFLPVKSVGVMGDGRRYDYVVALRAVETIDFMTARWAHLPYDFLDLVSRRIINEIPGISRVTYDISGKPPATIEWE.

The Glutamine amidotransferase type-1 domain occupies 8–206 (KILILDFGSQ…VRKLCQCEAR (199 aa)). C85 acts as the Nucleophile in catalysis. Residues H180 and E182 contribute to the active site. The GMPS ATP-PPase domain maps to 207–399 (WTTGNIVEDA…LGLPYEMVYR (193 aa)). Residue 234–240 (SGGVDSS) participates in ATP binding.

In terms of assembly, homodimer.

The catalysed reaction is XMP + L-glutamine + ATP + H2O = GMP + L-glutamate + AMP + diphosphate + 2 H(+). It participates in purine metabolism; GMP biosynthesis; GMP from XMP (L-Gln route): step 1/1. Functionally, catalyzes the synthesis of GMP from XMP. The sequence is that of GMP synthase [glutamine-hydrolyzing] from Methylococcus capsulatus (strain ATCC 33009 / NCIMB 11132 / Bath).